The primary structure comprises 270 residues: 5'-AMP-activated protein kinase subunit beta-1 (270 aa).

The interval 1–43 (MGNTSSERAALERHGGHKTPRRDSSGGTKDGDRPKILMDSPED) is disordered. Gly2 carries the N-myristoyl glycine lipid modification. Residue Thr4 is modified to Phosphothreonine. Phosphoserine occurs at positions 5 and 6. Thr19 carries the phosphothreonine modification. Residues 21–36 (RRDSSGGTKDGDRPKI) are compositionally biased toward basic and acidic residues. Ser24 and Ser25 each carry phosphoserine; by autocatalysis. Phosphoserine is present on residues Ser40, Ser96, Ser101, and Ser108. Positions 68–163 (EVNDKAPAQA…QVKKTDFEVF (96 aa)) are glycogen-binding domain. Thr148 bears the Phosphothreonine mark. Ser182 carries the phosphoserine modification.

Belongs to the 5'-AMP-activated protein kinase beta subunit family. AMPK is a heterotrimer of an alpha catalytic subunit (PRKAA1 or PRKAA2), a beta (PRKAB1 or PRKAB2) and a gamma non-catalytic subunits (PRKAG1, PRKAG2 or PRKAG3). Interacts with FNIP1 and FNIP2. In terms of processing, phosphorylated when associated with the catalytic subunit (PRKAA1 or PRKAA2). Phosphorylated by ULK1; leading to negatively regulate AMPK activity and suggesting the existence of a regulatory feedback loop between ULK1 and AMPK.

In terms of biological role, non-catalytic subunit of AMP-activated protein kinase (AMPK), an energy sensor protein kinase that plays a key role in regulating cellular energy metabolism. In response to reduction of intracellular ATP levels, AMPK activates energy-producing pathways and inhibits energy-consuming processes: inhibits protein, carbohydrate and lipid biosynthesis, as well as cell growth and proliferation. AMPK acts via direct phosphorylation of metabolic enzymes, and by longer-term effects via phosphorylation of transcription regulators. Also acts as a regulator of cellular polarity by remodeling the actin cytoskeleton; probably by indirectly activating myosin. Beta non-catalytic subunit acts as a scaffold on which the AMPK complex assembles, via its C-terminus that bridges alpha (PRKAA1 or PRKAA2) and gamma subunits (PRKAG1, PRKAG2 or PRKAG3). The polypeptide is 5'-AMP-activated protein kinase subunit beta-1 (PRKAB1) (Homo sapiens (Human)).